A 215-amino-acid polypeptide reads, in one-letter code: Ion-translocating oxidoreductase complex subunit G (215 aa).

A helical transmembrane segment spans residues 9-29 (GLLLSGFALICTAAVALVNEA). At threonine 176 the chain carries FMN phosphoryl threonine.

It belongs to the RnfG family. In terms of assembly, the complex is composed of six subunits: RnfA, RnfB, RnfC, RnfD, RnfE and RnfG. It depends on FMN as a cofactor.

The protein localises to the cell inner membrane. Part of a membrane-bound complex that couples electron transfer with translocation of ions across the membrane. This is Ion-translocating oxidoreductase complex subunit G from Shewanella amazonensis (strain ATCC BAA-1098 / SB2B).